Here is a 306-residue protein sequence, read N- to C-terminus: MQPPGDDAAPRCPFAGAHAPDAPHVPEAAGDDVQAGWHRAQLDFSQSMSYGDYLSLDPILDAQHPRSPDHNEMLFIIQHQTSELWMKLALYELRAALASIRDDALPPAFKMLARVSRVLEQLVQAWNVLATMTPSEYSAMRPYLGASSGFQSYQYRELEFILGNKNAQMLRPHAHRPAIHAHLEASLQAPSLYDEVIRLLARRGFPIAPERLDADWTQPTRHDRTVETAWLAVYREPNAHWELYEMAEELVDLEDAFRQWRFRHVTTVERIIGFKQGTGSTSGAPYLRKMLDVVLFPELWHVRTTL.

The disordered stretch occupies residues Met1–Ala29. Substrate-binding positions include Phe75–His79, Tyr137, and Arg141. A heme-binding site is contributed by His264. A substrate-binding site is contributed by Thr278.

The protein belongs to the tryptophan 2,3-dioxygenase family. Homotetramer. Heme serves as cofactor.

The enzyme catalyses L-tryptophan + O2 = N-formyl-L-kynurenine. It participates in amino-acid degradation; L-tryptophan degradation via kynurenine pathway; L-kynurenine from L-tryptophan: step 1/2. Heme-dependent dioxygenase that catalyzes the oxidative cleavage of the L-tryptophan (L-Trp) pyrrole ring and converts L-tryptophan to N-formyl-L-kynurenine. Catalyzes the oxidative cleavage of the indole moiety. The protein is Tryptophan 2,3-dioxygenase of Burkholderia mallei (strain NCTC 10247).